The chain runs to 297 residues: Protease HtpX homolog (297 aa).

The next 2 membrane-spanning stretches (helical) occupy residues 14 to 34 (IFLI…AGYL) and 39 to 59 (YQFG…SMIF). Histidine 143 is a binding site for Zn(2+). Glutamate 144 is an active-site residue. Histidine 147 contacts Zn(2+). The next 2 helical transmembrane spans lie at 153 to 173 (IRIS…ASMG) and 196 to 216 (IVFL…ASMV). Zn(2+) is bound at residue glutamate 225.

This sequence belongs to the peptidase M48B family. Zn(2+) serves as cofactor.

The protein localises to the cell membrane. This Streptococcus uberis (strain ATCC BAA-854 / 0140J) protein is Protease HtpX homolog.